A 266-amino-acid chain; its full sequence is Diphthine synthase (266 aa).

S-adenosyl-L-methionine is bound by residues Leu-9, Asp-85, Ile-88, 113–114 (TA), Leu-168, Ala-210, and His-235.

This sequence belongs to the diphthine synthase family. As to quaternary structure, homodimer.

It catalyses the reaction 2-[(3S)-amino-3-carboxypropyl]-L-histidyl-[translation elongation factor 2] + 3 S-adenosyl-L-methionine = diphthine-[translation elongation factor 2] + 3 S-adenosyl-L-homocysteine + 3 H(+). It functions in the pathway protein modification; peptidyl-diphthamide biosynthesis. In terms of biological role, S-adenosyl-L-methionine-dependent methyltransferase that catalyzes the trimethylation of the amino group of the modified target histidine residue in translation elongation factor 2 (EF-2), to form an intermediate called diphthine. The three successive methylation reactions represent the second step of diphthamide biosynthesis. This is Diphthine synthase from Natronomonas pharaonis (strain ATCC 35678 / DSM 2160 / CIP 103997 / JCM 8858 / NBRC 14720 / NCIMB 2260 / Gabara) (Halobacterium pharaonis).